We begin with the raw amino-acid sequence, 2772 residues long: Protein DDB_G0276689 (2772 aa).

Disordered regions lie at residues 50–82 (QQLK…NNNN), 371–415 (NLET…NGKS), 475–514 (LDIN…KNNL), 612–650 (NKNN…NNNE), 685–708 (LRGS…DSSL), and 933–982 (LVNN…NNSN). Low complexity-rich tracts occupy residues 376-412 (NNNN…NNNN), 478-514 (NSKN…KNNL), 614-649 (NNNN…NNNN), and 688-708 (SFSP…DSSL). Residues 1065–1089 (LSKWILNLDDNNYNHIPFMSLVLMP) form an LRR 1 repeat. The tract at residues 1282–1319 (NNNNIDNNNNNNNNNNNNNNNNNNNNNNNNNNNNNNNN) is disordered. 2 LRR repeats span residues 1393–1416 (LSNL…TPKN) and 1543–1567 (HKDV…SFSN). Low complexity predominate over residues 1587-1619 (QNNNYNNNNYNNNYNNNNNNNNNNNNNNNNNNN). The disordered stretch occupies residues 1587–1622 (QNNNYNNNNYNNNYNNNNNNNNNNNNNNNNNNNIDN). One copy of the LRR 4 repeat lies at 1899-1922 (LEELTKQEIGYQVLLVLPTDLQVE). 2 stretches are compositionally biased toward polar residues: residues 1999-2011 (YVSN…NDQI) and 2073-2083 (LNIVHSTSPNS). Disordered regions lie at residues 1999-2021 (YVSN…KDKK), 2054-2083 (EISN…SPNS), and 2367-2386 (NNSS…NNNN). Residues 2414–2439 (TTIINNIEMDKNRLDEAIYYLKKYGN) form an LRR 5 repeat.

In Dictyostelium discoideum (Social amoeba), this protein is Protein DDB_G0276689.